Here is a 433-residue protein sequence, read N- to C-terminus: Trigger factor (433 aa).

The PPIase FKBP-type domain maps to 163-248 (GDTVNIDFSG…VNEIKFKEVP (86 aa)).

Belongs to the FKBP-type PPIase family. Tig subfamily.

It localises to the cytoplasm. The enzyme catalyses [protein]-peptidylproline (omega=180) = [protein]-peptidylproline (omega=0). In terms of biological role, involved in protein export. Acts as a chaperone by maintaining the newly synthesized protein in an open conformation. Functions as a peptidyl-prolyl cis-trans isomerase. The sequence is that of Trigger factor from Staphylococcus aureus (strain bovine RF122 / ET3-1).